A 155-amino-acid polypeptide reads, in one-letter code: Large ribosomal subunit protein uL22 (155 aa).

Belongs to the universal ribosomal protein uL22 family. In terms of assembly, part of the 50S ribosomal subunit.

In terms of biological role, this protein binds specifically to 23S rRNA. It makes multiple contacts with different domains of the 23S rRNA in the assembled 50S subunit and ribosome. Its function is as follows. The globular domain of the protein is located near the polypeptide exit tunnel on the outside of the subunit, while an extended beta-hairpin is found that lines the wall of the exit tunnel in the center of the 70S ribosome. This Pyrococcus horikoshii (strain ATCC 700860 / DSM 12428 / JCM 9974 / NBRC 100139 / OT-3) protein is Large ribosomal subunit protein uL22.